The chain runs to 265 residues: Putative hydro-lyase Teth514_1597 (265 aa).

It belongs to the D-glutamate cyclase family.

The chain is Putative hydro-lyase Teth514_1597 from Thermoanaerobacter sp. (strain X514).